A 465-amino-acid polypeptide reads, in one-letter code: Alpha-2A adrenergic receptor (465 aa).

Residues 1–48 (MFRQEQPLAEGSFAPMGSLQPDAGNASWNGTEAPGGGARATPYSLQVT) are Extracellular-facing. N-linked (GlcNAc...) asparagine glycosylation is found at Asn-25 and Asn-29. A helical transmembrane segment spans residues 49-74 (LTLVCLAGLLMLLTVFGNVLVIIAVF). Residues 75 to 85 (TSRALKAPQNL) are Cytoplasmic-facing. Residues 86 to 111 (FLVSLASADILVATLVIPFSLANEVM) form a helical membrane-spanning segment. At 112–121 (GYWYFGKAWC) the chain is on the extracellular side. Cysteines 121 and 203 form a disulfide. The chain crosses the membrane as a helical span at residues 122–144 (EIYLALDVLFCTSSIVHLCAISL). The Cytoplasmic portion of the chain corresponds to 145 to 166 (DRYWSITQAIEYNLKRTPRRIK). Residues 167 to 187 (AIIITVWVISAVISFPPLISI) form a helical membrane-spanning segment. At 188-209 (EKKGGGGGPQPAEPRCEINDQK) the chain is on the extracellular side. The helical transmembrane segment at 210–232 (WYVISSCIGSFFAPCLIMILVYV) threads the bilayer. The Cytoplasmic portion of the chain corresponds to 233–389 (RIYQIAKRRT…RQNREKRFTF (157 aa)). Positions 242 to 368 (TRVPPSRRGP…TPAAGPGEER (127 aa)) are disordered. The segment covering 313–330 (SSDHAERPPGPRRPERGP) has biased composition (basic and acidic residues). The residue at position 346 (Ser-346) is a Phosphoserine. At Arg-368 the chain carries Omega-N-methylarginine. A helical membrane pass occupies residues 390 to 410 (VLAVVIGVFVVCWFPFFFTYT). Residues 411–424 (LTAVGCSVPRTLFK) are Extracellular-facing. The chain crosses the membrane as a helical span at residues 425-444 (FFFWFGYCNSSLNPVIYTIF). Topologically, residues 445-465 (NHDFRRAFKKILCRGDRKRIV) are cytoplasmic. Cys-457 carries the S-palmitoyl cysteine lipid modification.

This sequence belongs to the G-protein coupled receptor 1 family. Adrenergic receptor subfamily. ADRA2A sub-subfamily.

The protein localises to the cell membrane. Functionally, alpha-2 adrenergic receptors mediate the catecholamine-induced inhibition of adenylate cyclase through the action of G proteins. The rank order of potency for agonists of this receptor is oxymetazoline &gt; clonidine &gt; epinephrine &gt; norepinephrine &gt; phenylephrine &gt; dopamine &gt; p-synephrine &gt; p-tyramine &gt; serotonin = p-octopamine. For antagonists, the rank order is yohimbine &gt; phentolamine = mianserine &gt; chlorpromazine = spiperone = prazosin &gt; propanolol &gt; alprenolol = pindolol. This chain is Alpha-2A adrenergic receptor, found in Homo sapiens (Human).